Here is a 75-residue protein sequence, read N- to C-terminus: uncharacterized protein (75 aa).

A signal peptide spans 1–26; the sequence is MQFLERHFSVLFPVLFFFSFYPISFA.

The protein localises to the secreted. This is an uncharacterized protein from Schizosaccharomyces pombe (strain 972 / ATCC 24843) (Fission yeast).